A 535-amino-acid polypeptide reads, in one-letter code: Suppressor of cytokine signaling 6 (535 aa).

Basic residues predominate over residues Arg-80–Gly-89. Residues Arg-80–Ser-105 are disordered. One can recognise an SH2 domain in the interval Trp-384–Val-491. In terms of domain architecture, SOCS box spans Arg-486–Tyr-535.

In terms of assembly, interacts with RBCK1. Interacts with phosphorylated IRS4. Interacts with KIT (phosphorylated). Interacts with PIM3.

The protein operates within protein modification; protein ubiquitination. Functionally, SOCS family proteins form part of a classical negative feedback system that regulates cytokine signal transduction. May be a substrate recognition component of a SCF-like ECS (Elongin BC-CUL2/5-SOCS-box protein) E3 ubiquitin-protein ligase complex which mediates the ubiquitination and subsequent proteasomal degradation of target proteins. Regulates KIT degradation by ubiquitination of the tyrosine-phosphorylated receptor. The protein is Suppressor of cytokine signaling 6 (SOCS6) of Pongo abelii (Sumatran orangutan).